Consider the following 325-residue polypeptide: tRNA dimethylallyltransferase (325 aa).

16–23 (GPTASGKT) serves as a coordination point for ATP. Substrate is bound at residue 18-23 (TASGKT). Interaction with substrate tRNA regions lie at residues 41–44 (DSAL), 165–169 (QRIQR), 253–258 (RCVGYR), and 286–293 (KRQITWLR).

Belongs to the IPP transferase family. As to quaternary structure, monomer. The cofactor is Mg(2+).

It carries out the reaction adenosine(37) in tRNA + dimethylallyl diphosphate = N(6)-dimethylallyladenosine(37) in tRNA + diphosphate. Functionally, catalyzes the transfer of a dimethylallyl group onto the adenine at position 37 in tRNAs that read codons beginning with uridine, leading to the formation of N6-(dimethylallyl)adenosine (i(6)A). This chain is tRNA dimethylallyltransferase, found in Ralstonia pickettii (strain 12J).